The sequence spans 252 residues: 3-dehydroquinate dehydratase (252 aa).

Residues 46–48 (EWR) and R82 each bind 3-dehydroquinate. Catalysis depends on H143, which acts as the Proton donor/acceptor. K170 functions as the Schiff-base intermediate with substrate in the catalytic mechanism. Positions 212, 231, and 235 each coordinate 3-dehydroquinate.

Belongs to the type-I 3-dehydroquinase family. As to quaternary structure, homodimer.

It carries out the reaction 3-dehydroquinate = 3-dehydroshikimate + H2O. It participates in metabolic intermediate biosynthesis; chorismate biosynthesis; chorismate from D-erythrose 4-phosphate and phosphoenolpyruvate: step 3/7. In terms of biological role, involved in the third step of the chorismate pathway, which leads to the biosynthesis of aromatic amino acids. Catalyzes the cis-dehydration of 3-dehydroquinate (DHQ) and introduces the first double bond of the aromatic ring to yield 3-dehydroshikimate. The protein is 3-dehydroquinate dehydratase of Listeria monocytogenes serovar 1/2a (strain ATCC BAA-679 / EGD-e).